The chain runs to 347 residues: MSVMFDPDTAIYPFPPKPTPLSIDEKAYYREKIKRLLKERNAVMVAHYYTDPEIQQLAEETGGCISDSLEMARFGAKHPASTLLVAGVRFMGETAKILSPEKTILMPTLQVECSLDLGCPVEEFNAFYDAHPDRTVVVYANTSAAVKARADWVVTSSIAVELIDHLDSLGEKIIWAPDKHLGRYVQKQTGGDILCWQGACIVHDEFKTQALTRLQEEYPDAAILVHPESPQAIVDMADAVGSTSQLIAAAKALPHQRLIVATDRGIFYKMQQAVPDKELLEAPTAGEGATCRSCAHCPWMAMNDLQAIAEALEQEGSNHEVHVDERLRERALVPLNRMLDFAATLRG.

Iminosuccinate is bound by residues His47 and Ser68. Cys113 lines the [4Fe-4S] cluster pocket. Iminosuccinate-binding positions include Tyr139 to Asn141 and Ser156. Cys200 provides a ligand contact to [4Fe-4S] cluster. Residues His226 to Glu228 and Thr243 each bind iminosuccinate. Cys297 lines the [4Fe-4S] cluster pocket.

The protein belongs to the quinolinate synthase family. Type 1 subfamily. The cofactor is [4Fe-4S] cluster.

The protein resides in the cytoplasm. It catalyses the reaction iminosuccinate + dihydroxyacetone phosphate = quinolinate + phosphate + 2 H2O + H(+). The protein operates within cofactor biosynthesis; NAD(+) biosynthesis; quinolinate from iminoaspartate: step 1/1. Catalyzes the condensation of iminoaspartate with dihydroxyacetone phosphate to form quinolinate. The chain is Quinolinate synthase from Shigella flexneri.